Reading from the N-terminus, the 81-residue chain is CLAVATA3/ESR (CLE)-related protein 5 (81 aa).

An N-terminal signal peptide occupies residues 1–26 (MATLILKQTLIILLIIFSLQTLSSQA). A hydroxyproline mark is found at proline 73 and proline 76. A glycan (O-linked (Ara...) hydroxyproline) is linked at proline 76.

It belongs to the CLV3/ESR signal peptide family. Post-translationally, the O-glycosylation (arabinosylation) of the hydroxyproline Pro-76 enhances binding affinity of the CLE5p peptide for its receptor. In terms of tissue distribution, mostly expressed in roots, and, to a lower extent, in seedlings, stems, apex, flowers and siliques.

The protein localises to the secreted. It localises to the extracellular space. Extracellular signal peptide that regulates cell fate. This is CLAVATA3/ESR (CLE)-related protein 5 from Arabidopsis thaliana (Mouse-ear cress).